We begin with the raw amino-acid sequence, 509 residues long: Coiled-coil domain-containing protein 181 (509 aa).

Residues 60 to 82 (EHTKQHSDPDKSLQDDVSPRRND) show a composition bias toward basic and acidic residues. Disordered regions lie at residues 60–121 (EHTK…EEDE) and 285–367 (GEPL…EEKE). Positions 320 to 334 (RTQSARISPVTSTYC) are enriched in polar residues. Residues 335–375 (LSPRQKELQKQLEQKREKLKREEEQRKIEEEKEKKRENDIV) are a coiled coil. The segment covering 338–367 (RQKELQKQLEQKREKLKREEEQRKIEEEKE) has biased composition (basic and acidic residues).

The protein belongs to the CCDC181 family. In terms of assembly, homodimer. Interacts with HOOK1. Interacts with HOOK2. Interacts with HOOK3.

It localises to the cytoplasm. Its subcellular location is the cytoskeleton. It is found in the cell projection. The protein resides in the cilium. The protein localises to the flagellum. Functionally, microtubule-binding protein that localizes to the microtubular manchette of elongating spermatids. The chain is Coiled-coil domain-containing protein 181 from Macaca fascicularis (Crab-eating macaque).